The sequence spans 263 residues: Regulatory protein RecX (263 aa).

Belongs to the RecX family.

The protein localises to the cytoplasm. In terms of biological role, modulates RecA activity. This Bacillus velezensis (strain DSM 23117 / BGSC 10A6 / LMG 26770 / FZB42) (Bacillus amyloliquefaciens subsp. plantarum) protein is Regulatory protein RecX.